Here is a 234-residue protein sequence, read N- to C-terminus: uncharacterized protein (234 aa).

Residues 212–234 (GKHLKLDSNTTENKTTKQNETGG) form a disordered region. A compositionally biased stretch (low complexity) spans 220–234 (NTTENKTTKQNETGG).

This is an uncharacterized protein from Methanothermobacter thermautotrophicus (Methanobacterium thermoformicicum).